The primary structure comprises 216 residues: Probable transaldolase (216 aa).

Lys84 (schiff-base intermediate with substrate) is an active-site residue.

It belongs to the transaldolase family. Type 3B subfamily.

It localises to the cytoplasm. It catalyses the reaction D-sedoheptulose 7-phosphate + D-glyceraldehyde 3-phosphate = D-erythrose 4-phosphate + beta-D-fructose 6-phosphate. It functions in the pathway carbohydrate degradation; pentose phosphate pathway; D-glyceraldehyde 3-phosphate and beta-D-fructose 6-phosphate from D-ribose 5-phosphate and D-xylulose 5-phosphate (non-oxidative stage): step 2/3. Its function is as follows. Transaldolase is important for the balance of metabolites in the pentose-phosphate pathway. This is Probable transaldolase from Exiguobacterium sp. (strain ATCC BAA-1283 / AT1b).